A 1173-amino-acid polypeptide reads, in one-letter code: DNA polymerase catalytic subunit (1173 aa).

Disordered stretches follow at residues 554–625 (PSLP…SASG) and 1123–1144 (EGPG…PPRK). The span at 564-578 (GGDGAGLEGGDGGTA) shows a compositional bias: gly residues. A compositionally biased stretch (acidic residues) spans 591-606 (DGEDEDDPEGGDEGEN). Over residues 607–618 (GECRENGLEKEG) the composition is skewed to basic and acidic residues. A compositionally biased stretch (gly residues) spans 1123–1138 (EGPGRGEGLGVGGGEG).

Belongs to the DNA polymerase type-B family.

The protein resides in the host nucleus. The enzyme catalyses DNA(n) + a 2'-deoxyribonucleoside 5'-triphosphate = DNA(n+1) + diphosphate. The sequence is that of DNA polymerase catalytic subunit (UL54) from Rattus.